Consider the following 373-residue polypeptide: UDP-N-acetylglucosamine--N-acetylmuramyl-(pentapeptide) pyrophosphoryl-undecaprenol N-acetylglucosamine transferase (373 aa).

UDP-N-acetyl-alpha-D-glucosamine-binding positions include 16–18 (TGG), Asn128, Arg164, Ser192, Ile250, and Gln295.

It belongs to the glycosyltransferase 28 family. MurG subfamily.

Its subcellular location is the cell inner membrane. The catalysed reaction is di-trans,octa-cis-undecaprenyl diphospho-N-acetyl-alpha-D-muramoyl-L-alanyl-D-glutamyl-meso-2,6-diaminopimeloyl-D-alanyl-D-alanine + UDP-N-acetyl-alpha-D-glucosamine = di-trans,octa-cis-undecaprenyl diphospho-[N-acetyl-alpha-D-glucosaminyl-(1-&gt;4)]-N-acetyl-alpha-D-muramoyl-L-alanyl-D-glutamyl-meso-2,6-diaminopimeloyl-D-alanyl-D-alanine + UDP + H(+). The protein operates within cell wall biogenesis; peptidoglycan biosynthesis. Functionally, cell wall formation. Catalyzes the transfer of a GlcNAc subunit on undecaprenyl-pyrophosphoryl-MurNAc-pentapeptide (lipid intermediate I) to form undecaprenyl-pyrophosphoryl-MurNAc-(pentapeptide)GlcNAc (lipid intermediate II). The chain is UDP-N-acetylglucosamine--N-acetylmuramyl-(pentapeptide) pyrophosphoryl-undecaprenol N-acetylglucosamine transferase from Paraburkholderia phymatum (strain DSM 17167 / CIP 108236 / LMG 21445 / STM815) (Burkholderia phymatum).